The sequence spans 61 residues: Small ribosomal subunit protein uS14 (61 aa).

4 residues coordinate Zn(2+): C24, C27, C40, and C43.

It belongs to the universal ribosomal protein uS14 family. Zinc-binding uS14 subfamily. As to quaternary structure, part of the 30S ribosomal subunit. Contacts proteins S3 and S10. It depends on Zn(2+) as a cofactor.

Its function is as follows. Binds 16S rRNA, required for the assembly of 30S particles and may also be responsible for determining the conformation of the 16S rRNA at the A site. The polypeptide is Small ribosomal subunit protein uS14 (Campylobacter jejuni subsp. jejuni serotype O:6 (strain 81116 / NCTC 11828)).